The sequence spans 719 residues: Eukaryotic translation initiation factor 3 subunit B (719 aa).

In terms of domain architecture, RRM spans 60–147; it reads NILVVDNLPV…HIFAVNMFDD (88 aa). WD repeat units lie at residues 167 to 207, 511 to 553, and 555 to 598; these read VPGE…KPEL, LKGK…TMAS, and EHFM…LYRI. A compositionally biased stretch (basic and acidic residues) spans 675 to 686; that stretch reads EKMERQKLRDGE. Positions 675 to 698 are disordered; it reads EKMERQKLRDGEASDEEEEYEAKE. The segment covering 687–698 has biased composition (acidic residues); it reads ASDEEEEYEAKE.

This sequence belongs to the eIF-3 subunit B family. In terms of assembly, component of the eukaryotic translation initiation factor 3 (eIF-3) complex.

It localises to the cytoplasm. In terms of biological role, RNA-binding component of the eukaryotic translation initiation factor 3 (eIF-3) complex, which is involved in protein synthesis of a specialized repertoire of mRNAs and, together with other initiation factors, stimulates binding of mRNA and methionyl-tRNAi to the 40S ribosome. The eIF-3 complex specifically targets and initiates translation of a subset of mRNAs involved in cell proliferation. The polypeptide is Eukaryotic translation initiation factor 3 subunit B (TIF3B1) (Nicotiana tabacum (Common tobacco)).